Reading from the N-terminus, the 337-residue chain is Pentalenene synthase (337 aa).

2 residues coordinate Mg(2+): D80 and D84. The short motif at 80–84 (DDLFD) is the DDXXD motif element. C128 and C136 are disulfide-bonded. N219, S223, and E227 together coordinate Mg(2+).

The protein belongs to the terpene synthase family. Monomer. Mg(2+) serves as cofactor.

It catalyses the reaction (2E,6E)-farnesyl diphosphate = pentalenene + diphosphate. The protein operates within sesquiterpene biosynthesis; pentalenene biosynthesis; pentalenene from farnesyl diphosphate: step 1/1. Its pathway is antibiotic biosynthesis; pentalenolactone biosynthesis. Catalyzes the cyclization of farnesyl diphosphate (FPP) to the tricyclic sesquiterpene pentalenene, which is the hydrocarbon precursor of the pentalenolactone family of antibiotics produced by a variety of Streptomyces species. The protein is Pentalenene synthase (penA) of Streptomyces exfoliatus (Streptomyces hydrogenans).